We begin with the raw amino-acid sequence, 438 residues long: Cell division cycle-associated 7-like protein (438 aa).

The Integrase domain-binding motif 1 (IBM1) signature appears at 9-33; the sequence is IPKEVADIFSAPSDDEEFVGFQDDV. The residue at position 21 (Ser-21) is a Phosphoserine. The segment at 56–115 is PSIP1-binding; it reads VCFRSKYFTEELRRIFKEDTDSEMEDFEGFTESELNMSSNPELMESELSDSDKAYPVMND. Residues 63–89 carry the Integrase domain-binding motif 2 (IBM2) motif; that stretch reads FTEELRRIFKEDTDSEMEDFEGFTESE. The tract at residues 74–199 is disordered; that stretch reads DTDSEMEDFE…ESRAESQENS (126 aa). At Thr-75 the chain carries Phosphothreonine. A compositionally biased stretch (acidic residues) spans 75–86; it reads TDSEMEDFEGFT. Position 77 is a phosphoserine (Ser-77). Residue Thr-86 is modified to Phosphothreonine. 5 positions are modified to phosphoserine: Ser-101, Ser-104, Ser-135, Ser-136, and Ser-159. Over residues 152-167 the composition is skewed to basic and acidic residues; it reads RTPDKDSSHLLDSKTD. The span at 168–177 shows a compositional bias: basic residues; that stretch reads LRRKKSSRQP. Phosphoserine is present on residues Ser-183 and Ser-185. The interval 201–223 is MYC-binding; sequence ALLKRAMNIKENKAMLAQLLAEL. Glycyl lysine isopeptide (Lys-Gly) (interchain with G-Cter in SUMO2) cross-links involve residues Lys-210 and Lys-213. Ser-249 carries the phosphoserine modification.

As to quaternary structure, interacts with MYC. Interacts (via IBM motifs) with PSIP1 (via IBD domain); phosphorylation increases its affinity for PSIP1. Post-translationally, phosphorylation increases its interaction with PSIP1. In terms of tissue distribution, expressed in all tissues but not detected in total brain.

Its subcellular location is the cytoplasm. The protein localises to the nucleus. In terms of biological role, plays a role in transcriptional regulation as a repressor that inhibits monoamine oxidase A (MAOA) activity and gene expression by binding to the promoter. Plays an important oncogenic role in mediating the full transforming effect of MYC in medulloblastoma cells. Involved in apoptotic signaling pathways; May act downstream of P38-kinase and BCL-2, but upstream of CASP3/caspase-3 as well as CCND1/cyclin D1 and E2F1. In Mus musculus (Mouse), this protein is Cell division cycle-associated 7-like protein (Cdca7l).